The following is a 336-amino-acid chain: Glyceraldehyde-3-phosphate dehydrogenase (336 aa).

NAD(+)-binding positions include 12-13, Asp34, and Ser120; that span reads RI. D-glyceraldehyde 3-phosphate is bound by residues 150-152, Thr181, Arg198, 211-212, and Arg234; these read SCT and TG. Residue Cys151 is the Nucleophile of the active site. NAD(+) is bound at residue Asn316.

The protein belongs to the glyceraldehyde-3-phosphate dehydrogenase family. Homotetramer.

It is found in the cytoplasm. It carries out the reaction D-glyceraldehyde 3-phosphate + phosphate + NAD(+) = (2R)-3-phospho-glyceroyl phosphate + NADH + H(+). It functions in the pathway carbohydrate degradation; glycolysis; pyruvate from D-glyceraldehyde 3-phosphate: step 1/5. Functionally, catalyzes the oxidative phosphorylation of glyceraldehyde 3-phosphate (G3P) to 1,3-bisphosphoglycerate (BPG) using the cofactor NAD. The first reaction step involves the formation of a hemiacetal intermediate between G3P and a cysteine residue, and this hemiacetal intermediate is then oxidized to a thioester, with concomitant reduction of NAD to NADH. The reduced NADH is then exchanged with the second NAD, and the thioester is attacked by a nucleophilic inorganic phosphate to produce BPG. This chain is Glyceraldehyde-3-phosphate dehydrogenase (gapA), found in Staphylococcus aureus.